We begin with the raw amino-acid sequence, 71 residues long: Conotoxin LvVIIB (71 aa).

The signal sequence occupies residues 1–17 (VLIIAVLFLAASELVTA). A propeptide spanning residues 18-42 (DYTRDEWQYRAASLRDAMRNFRDTR) is cleaved from the precursor. 3 disulfides stabilise this stretch: Cys43-Cys57, Cys50-Cys62, and Cys56-Cys69.

This sequence belongs to the conotoxin O1 superfamily. In terms of tissue distribution, expressed by the venom duct.

Its subcellular location is the secreted. The protein is Conotoxin LvVIIB of Conus lividus (Livid cone).